The chain runs to 205 residues: Large ribosomal subunit protein uL4 (205 aa).

The interval 53–77 is disordered; the sequence is RAAVRGGGRKPWKQKGTGRARAGSI. Basic residues predominate over residues 59–70; it reads GGRKPWKQKGTG.

The protein belongs to the universal ribosomal protein uL4 family. In terms of assembly, part of the 50S ribosomal subunit.

One of the primary rRNA binding proteins, this protein initially binds near the 5'-end of the 23S rRNA. It is important during the early stages of 50S assembly. It makes multiple contacts with different domains of the 23S rRNA in the assembled 50S subunit and ribosome. Functionally, forms part of the polypeptide exit tunnel. This is Large ribosomal subunit protein uL4 from Acidithiobacillus ferrooxidans (strain ATCC 23270 / DSM 14882 / CIP 104768 / NCIMB 8455) (Ferrobacillus ferrooxidans (strain ATCC 23270)).